A 246-amino-acid polypeptide reads, in one-letter code: tRNA1(Val) (adenine(37)-N6)-methyltransferase (246 aa).

This sequence belongs to the methyltransferase superfamily. tRNA (adenine-N(6)-)-methyltransferase family.

It is found in the cytoplasm. It carries out the reaction adenosine(37) in tRNA1(Val) + S-adenosyl-L-methionine = N(6)-methyladenosine(37) in tRNA1(Val) + S-adenosyl-L-homocysteine + H(+). In terms of biological role, specifically methylates the adenine in position 37 of tRNA(1)(Val) (anticodon cmo5UAC). The chain is tRNA1(Val) (adenine(37)-N6)-methyltransferase from Shewanella halifaxensis (strain HAW-EB4).